A 479-amino-acid polypeptide reads, in one-letter code: Mitochondria-eating protein (479 aa).

2 coiled-coil regions span residues 109–161 (ERKL…LATT) and 187–223 (LRRL…RIAR). Disordered stretches follow at residues 220-251 (RIAR…GRAR) and 456-479 (RSRS…SRSR). Positions 235-249 (RSPSPLPLRSCSPGR) are enriched in low complexity.

This sequence belongs to the MIEAP family.

Its subcellular location is the cytoplasm. The protein localises to the cytosol. It is found in the mitochondrion outer membrane. It localises to the mitochondrion matrix. Its function is as follows. Key regulator of mitochondrial quality that mediates the repairing or degradation of unhealthy mitochondria in response to mitochondrial damage. Mediator of mitochondrial protein catabolic process (also named MALM) by mediating the degradation of damaged proteins inside mitochondria by promoting the accumulation in the mitochondrial matrix of hydrolases that are characteristic of the lysosomal lumen. Also involved in mitochondrion degradation of damaged mitochondria by promoting the formation of vacuole-like structures (named MIV), which engulf and degrade unhealthy mitochondria by accumulating lysosomes. Binds cardiolipin. May form molecular condensates (non-membrane-bounded organelles) within mitochondria that compartmentalize and promote cardiolipin metabolism. In Gallus gallus (Chicken), this protein is Mitochondria-eating protein (SPATA18).